A 355-amino-acid polypeptide reads, in one-letter code: MAIRSLPSSSRCSSSSSSSSYSLASTSLSNRLETIFKKASELCTLCDIEACVIYYGPDGELKTWPPEREKVEDIALRYSQLNEALRRKKSVTLYDFLNKKKDKTNLEKKAKITDNDDLKTCLKNVNILKYPLADHYSPDQVSQLIQSLEPHVSKVRERIRFVESQKHKETKPDHQSLASSSLNHQTQSLNPSQFSLFMYNHGDNTLSQIPVSASNFNQDYFSALLEQSELKSQIMKQDLCGYEQNMCMSNHGDATLSQIPLSASNLNQDFSALLQDESGLMQQELCGYDQNMFMNNNNFQHSFVSNTQDHSAPVVQESVNNNYGLMPHVPCGYDQNLFTSDITNNNLLINNSMFL.

The interval 1–22 is disordered; it reads MAIRSLPSSSRCSSSSSSSSYS. Residues 26–68 form the MADS-box domain; it reads TSLSNRLETIFKKASELCTLCDIEACVIYYGPDGELKTWPPER. Basic and acidic residues predominate over residues 162–174; that stretch reads VESQKHKETKPDH. The segment at 162–186 is disordered; that stretch reads VESQKHKETKPDHQSLASSSLNHQT. Residues 176-186 show a composition bias toward polar residues; the sequence is SLASSSLNHQT.

In terms of assembly, interacts with MEE14/CBP1.

It is found in the nucleus. In terms of biological role, probable transcription factor that may function in the maintenance of the proper function of the central cell in pollen tube attraction. The polypeptide is Agamous-like MADS-box protein AGL81 (Arabidopsis thaliana (Mouse-ear cress)).